A 212-amino-acid polypeptide reads, in one-letter code: Ras-related protein Rab-2A (212 aa).

Residue Ala-2 is modified to N-acetylalanine. Residues 2-19 are required for interaction with PRKCI; that stretch reads AYAYLFKYIIIGDTGVGK. GTP contacts are provided by Gly-16, Val-17, Gly-18, Lys-19, Ser-20, Cys-21, and Thr-38. Residue Ser-20 participates in Mg(2+) binding. The Switch 1 motif lies at 37-42; it reads LTIGVE. Mg(2+)-binding residues include Thr-38 and Asp-61. The Switch 2 motif lies at 63-72; sequence AGQESFRSIT. Residues Gly-64, Asn-119, Lys-120, Asp-122, Ala-150, and Lys-151 each contribute to the GTP site. Residues 190–212 form a disordered region; that stretch reads QHAATNASHGSNQGGQQAGGGCC. The segment covering 201 to 212 has biased composition (gly residues); sequence NQGGQQAGGGCC. Residues Cys-211 and Cys-212 are each lipidated (S-geranylgeranyl cysteine).

It belongs to the small GTPase superfamily. Rab family. As to quaternary structure, interacts with PRKCI. Interacts with TRIP11. Interacts (in GTP-bound form) with GARIN1B. Interacts (GTP-bound) with HOPS complex component VPS39; interaction contributes to obtaining a functional HOPS complex that promotes autophagosome-lysosome membrane fusion driven by STX17-SNAP29-VAMP8. Interacts with VPS41. Mg(2+) serves as cofactor. In terms of processing, prenylated. Prenylation is required for association with cellular membranes.

The protein resides in the endoplasmic reticulum-Golgi intermediate compartment membrane. It is found in the melanosome. Its subcellular location is the endoplasmic reticulum membrane. The protein localises to the golgi apparatus membrane. It localises to the cytoplasmic vesicle. The protein resides in the secretory vesicle. It is found in the acrosome. Its subcellular location is the autophagosome membrane. It carries out the reaction GTP + H2O = GDP + phosphate + H(+). Regulated by guanine nucleotide exchange factors (GEFs) which promote the exchange of bound GDP for free GTP, GTPase activating proteins (GAPs) which increase the GTP hydrolysis activity, and GDP dissociation inhibitors (GDIs) which inhibit the dissociation of the nucleotide from the GTPase. Functionally, the small GTPases Rab are key regulators of intracellular membrane trafficking, from the formation of transport vesicles to their fusion with membranes. Rabs cycle between active GTP-bound and inactive GDP-bound states. In their active state, drive transport of vesicular carriers from donor organelles to acceptor organelles to regulate the membrane traffic that maintains organelle identity and morphology. RAB2A regulates autophagy by promoting autophagosome-lysosome fusion via recruitment of the HOPS endosomal tethering complex; this process involves autophagosomal RAB2A and lysosomal RAB39A recruitment of HOPS subcomplexes VPS39-VPS11 and VPS41-VPS16-VPS18-VPS33A, respectively, which assemble into a functional complex to mediate membrane tethering and SNAREs-driven membrane fusion. Required for protein transport from the endoplasmic reticulum to the Golgi complex. Regulates the compacted morphology of the Golgi. Together with RAB2B, redundantly required for efficient autophagic flux. The protein is Ras-related protein Rab-2A of Mus musculus (Mouse).